We begin with the raw amino-acid sequence, 330 residues long: Delta-aminolevulinic acid dehydratase (330 aa).

C122, C124, H131, and C132 together coordinate Zn(2+). K199 functions as the Schiff-base intermediate with substrate in the catalytic mechanism. K199 carries the N6-succinyllysine modification. Residue R209 coordinates 5-aminolevulinate. S215 carries the post-translational modification Phosphoserine. R221 serves as a coordination point for 5-aminolevulinate. C223 contacts Zn(2+). The active-site Schiff-base intermediate with substrate is K252. K252 carries the N6-succinyllysine modification. Residues S279 and Y318 each coordinate 5-aminolevulinate.

The protein belongs to the ALAD family. As to quaternary structure, homooctamer; active form. Homohexamer; low activity form. It depends on Zn(2+) as a cofactor.

It is found in the cytoplasm. Its subcellular location is the cytosol. It carries out the reaction 2 5-aminolevulinate = porphobilinogen + 2 H2O + H(+). It functions in the pathway porphyrin-containing compound metabolism; protoporphyrin-IX biosynthesis; coproporphyrinogen-III from 5-aminolevulinate: step 1/4. Its activity is regulated as follows. Can alternate between a fully active homooctamer and a low-activity homohexamer. A bound magnesium ion may promote the assembly of the fully active homooctamer. The magnesium-binding site is absent in the low-activity homohexamer. Inhibited by compounds that favor the hexameric state. Inhibited by divalent lead ions. The lead ions partially displace the zinc cofactor. In terms of biological role, catalyzes an early step in the biosynthesis of tetrapyrroles. Binds two molecules of 5-aminolevulinate per subunit, each at a distinct site, and catalyzes their condensation to form porphobilinogen. The sequence is that of Delta-aminolevulinic acid dehydratase (Alad) from Mus musculus (Mouse).